A 68-amino-acid chain; its full sequence is Large ribosomal subunit protein bL32 (68 aa).

It belongs to the bacterial ribosomal protein bL32 family.

The sequence is that of Large ribosomal subunit protein bL32 from Orientia tsutsugamushi (strain Boryong) (Rickettsia tsutsugamushi).